The chain runs to 890 residues: Alanine--tRNA ligase (890 aa).

Zn(2+) contacts are provided by histidine 573, histidine 577, cysteine 676, and histidine 680.

Belongs to the class-II aminoacyl-tRNA synthetase family. Zn(2+) is required as a cofactor.

Its subcellular location is the cytoplasm. The catalysed reaction is tRNA(Ala) + L-alanine + ATP = L-alanyl-tRNA(Ala) + AMP + diphosphate. Catalyzes the attachment of alanine to tRNA(Ala) in a two-step reaction: alanine is first activated by ATP to form Ala-AMP and then transferred to the acceptor end of tRNA(Ala). Also edits incorrectly charged Ser-tRNA(Ala) and Gly-tRNA(Ala) via its editing domain. The sequence is that of Alanine--tRNA ligase from Corynebacterium efficiens (strain DSM 44549 / YS-314 / AJ 12310 / JCM 11189 / NBRC 100395).